The primary structure comprises 99 residues: Translation initiation factor 1A (99 aa).

Residues 11 to 84 form the S1-like domain; that stretch reads RRVRTPRRGE…EKADIVWRYT (74 aa).

This sequence belongs to the eIF-1A family.

Functionally, seems to be required for maximal rate of protein biosynthesis. Enhances ribosome dissociation into subunits and stabilizes the binding of the initiator Met-tRNA(I) to 40 S ribosomal subunits. This is Translation initiation factor 1A (eIF1A) from Methanothermobacter thermautotrophicus (strain ATCC 29096 / DSM 1053 / JCM 10044 / NBRC 100330 / Delta H) (Methanobacterium thermoautotrophicum).